The following is a 430-amino-acid chain: Histidine--tRNA ligase, chloroplastic (430 aa).

It belongs to the class-II aminoacyl-tRNA synthetase family.

It localises to the plastid. The protein resides in the chloroplast. It carries out the reaction tRNA(His) + L-histidine + ATP = L-histidyl-tRNA(His) + AMP + diphosphate + H(+). This chain is Histidine--tRNA ligase, chloroplastic, found in Pyropia yezoensis (Susabi-nori).